A 330-amino-acid polypeptide reads, in one-letter code: tRNA-modifying protein YgfZ (330 aa).

Tryptophan 28 and tryptophan 190 together coordinate folate.

Belongs to the tRNA-modifying YgfZ family.

It localises to the cytoplasm. Its function is as follows. Folate-binding protein involved in regulating the level of ATP-DnaA and in the modification of some tRNAs. It is probably a key factor in regulatory networks that act via tRNA modification, such as initiation of chromosomal replication. In Serratia proteamaculans (strain 568), this protein is tRNA-modifying protein YgfZ.